We begin with the raw amino-acid sequence, 261 residues long: Kallikrein 1-related peptidase b1 (261 aa).

The N-terminal stretch at 1–18 (MWFLILFLALSLGGIDAA) is a signal peptide. Residues 19–24 (PPVQSR) constitute a propeptide, activation peptide. The Peptidase S1 domain occupies 25–258 (IVGGFKCEKN…FTSWIKDTLA (234 aa)). 5 disulfide bridges follow: C31–C173, C50–C66, C152–C219, C184–C198, and C209–C234. The Charge relay system role is filled by H65. N102 is a glycosylation site (N-linked (GlcNAc...) asparagine). D120 (charge relay system) is an active-site residue. S213 serves as the catalytic Charge relay system.

Belongs to the peptidase S1 family. Kallikrein subfamily.

It catalyses the reaction Preferential cleavage of Arg-|-Xaa bonds in small molecule substrates. Highly selective action to release kallidin (lysyl-bradykinin) from kininogen involves hydrolysis of Met-|-Xaa or Leu-|-Xaa.. Glandular kallikreins cleave Met-Lys and Arg-Ser bonds in kininogen to release Lys-bradykinin. This chain is Kallikrein 1-related peptidase b1 (Klk1b1), found in Mus musculus (Mouse).